The following is a 130-amino-acid chain: Ribonuclease P protein component (130 aa).

The protein belongs to the RnpA family. Consists of a catalytic RNA component (M1 or rnpB) and a protein subunit.

The catalysed reaction is Endonucleolytic cleavage of RNA, removing 5'-extranucleotides from tRNA precursor.. Functionally, RNaseP catalyzes the removal of the 5'-leader sequence from pre-tRNA to produce the mature 5'-terminus. It can also cleave other RNA substrates such as 4.5S RNA. The protein component plays an auxiliary but essential role in vivo by binding to the 5'-leader sequence and broadening the substrate specificity of the ribozyme. The sequence is that of Ribonuclease P protein component from Desulfovibrio desulfuricans (strain ATCC 27774 / DSM 6949 / MB).